Reading from the N-terminus, the 876-residue chain is Alanine--tRNA ligase (876 aa).

Zn(2+)-binding residues include histidine 564, histidine 568, cysteine 666, and histidine 670.

It belongs to the class-II aminoacyl-tRNA synthetase family. In terms of assembly, homotetramer. It depends on Zn(2+) as a cofactor.

Its subcellular location is the cytoplasm. It catalyses the reaction tRNA(Ala) + L-alanine + ATP = L-alanyl-tRNA(Ala) + AMP + diphosphate. Its function is as follows. Catalyzes the attachment of alanine to tRNA(Ala) in a two-step reaction: alanine is first activated by ATP to form Ala-AMP and then transferred to the acceptor end of tRNA(Ala). Also edits incorrectly charged Ser-tRNA(Ala) and Gly-tRNA(Ala) via its editing domain. This is Alanine--tRNA ligase from Salmonella typhi.